We begin with the raw amino-acid sequence, 91 residues long: Protein LURE 1.6 (91 aa).

An N-terminal signal peptide occupies residues Met-1–Ser-20. Intrachain disulfides connect Cys-59/Cys-76, Cys-62/Cys-83, and Cys-66/Cys-85.

This sequence belongs to the DEFL family. Expressed in the pistil. Detected in the synergid cells.

It localises to the secreted. Its function is as follows. Pollen tube attractants guiding pollen tubes to the ovular micropyle. This chain is Protein LURE 1.6, found in Arabidopsis thaliana (Mouse-ear cress).